Consider the following 234-residue polypeptide: tRNA1(Val) (adenine(37)-N6)-methyltransferase (234 aa).

This sequence belongs to the methyltransferase superfamily. tRNA (adenine-N(6)-)-methyltransferase family.

The protein resides in the cytoplasm. The enzyme catalyses adenosine(37) in tRNA1(Val) + S-adenosyl-L-methionine = N(6)-methyladenosine(37) in tRNA1(Val) + S-adenosyl-L-homocysteine + H(+). In terms of biological role, specifically methylates the adenine in position 37 of tRNA(1)(Val) (anticodon cmo5UAC). The sequence is that of tRNA1(Val) (adenine(37)-N6)-methyltransferase from Aliivibrio salmonicida (strain LFI1238) (Vibrio salmonicida (strain LFI1238)).